Consider the following 206-residue polypeptide: ATP-dependent Clp protease proteolytic subunit 1 (206 aa).

The active-site Nucleophile is Ser100. His125 is an active-site residue.

This sequence belongs to the peptidase S14 family. Fourteen ClpP subunits assemble into 2 heptameric rings which stack back to back to give a disk-like structure with a central cavity, resembling the structure of eukaryotic proteasomes.

The protein localises to the cytoplasm. It carries out the reaction Hydrolysis of proteins to small peptides in the presence of ATP and magnesium. alpha-casein is the usual test substrate. In the absence of ATP, only oligopeptides shorter than five residues are hydrolyzed (such as succinyl-Leu-Tyr-|-NHMec, and Leu-Tyr-Leu-|-Tyr-Trp, in which cleavage of the -Tyr-|-Leu- and -Tyr-|-Trp bonds also occurs).. Its function is as follows. Cleaves peptides in various proteins in a process that requires ATP hydrolysis. Has a chymotrypsin-like activity. Plays a major role in the degradation of misfolded proteins. This Myxococcus xanthus (strain DK1622) protein is ATP-dependent Clp protease proteolytic subunit 1.